We begin with the raw amino-acid sequence, 396 residues long: S-adenosylmethionine synthase (396 aa).

Histidine 15 lines the ATP pocket. A Mg(2+)-binding site is contributed by aspartate 17. Glutamate 43 serves as a coordination point for K(+). Positions 56 and 99 each coordinate L-methionine. Residues 99–109 are flexible loop; the sequence is QSPDIALGVNR. ATP is bound by residues 175 to 177, 241 to 242, aspartate 250, 256 to 257, alanine 273, and lysine 277; these read DGK, RF, and RK. Position 250 (aspartate 250) interacts with L-methionine. Lysine 281 is an L-methionine binding site.

The protein belongs to the AdoMet synthase family. In terms of assembly, homotetramer; dimer of dimers. Requires Mg(2+) as cofactor. K(+) is required as a cofactor.

The protein resides in the cytoplasm. The enzyme catalyses L-methionine + ATP + H2O = S-adenosyl-L-methionine + phosphate + diphosphate. It functions in the pathway amino-acid biosynthesis; S-adenosyl-L-methionine biosynthesis; S-adenosyl-L-methionine from L-methionine: step 1/1. Its function is as follows. Catalyzes the formation of S-adenosylmethionine (AdoMet) from methionine and ATP. The overall synthetic reaction is composed of two sequential steps, AdoMet formation and the subsequent tripolyphosphate hydrolysis which occurs prior to release of AdoMet from the enzyme. This Carboxydothermus hydrogenoformans (strain ATCC BAA-161 / DSM 6008 / Z-2901) protein is S-adenosylmethionine synthase.